The sequence spans 235 residues: dITP/XTP pyrophosphatase (235 aa).

7–12 (STNPGK) contacts substrate. Residue Asp70 is the Proton acceptor of the active site. Asp70 contributes to the Mg(2+) binding site. Residues Ser71, 180–183 (FGYD), Lys211, and 216–217 (HR) each bind substrate.

The protein belongs to the HAM1 NTPase family. Homodimer. Requires Mg(2+) as cofactor.

It carries out the reaction XTP + H2O = XMP + diphosphate + H(+). It catalyses the reaction dITP + H2O = dIMP + diphosphate + H(+). The catalysed reaction is ITP + H2O = IMP + diphosphate + H(+). In terms of biological role, pyrophosphatase that catalyzes the hydrolysis of nucleoside triphosphates to their monophosphate derivatives, with a high preference for the non-canonical purine nucleotides XTP (xanthosine triphosphate), dITP (deoxyinosine triphosphate) and ITP. Seems to function as a house-cleaning enzyme that removes non-canonical purine nucleotides from the nucleotide pool, thus preventing their incorporation into DNA/RNA and avoiding chromosomal lesions. In Anaeromyxobacter dehalogenans (strain 2CP-C), this protein is dITP/XTP pyrophosphatase.